The primary structure comprises 642 residues: Tigger transposable element derived 5 (642 aa).

The segment at 1 to 54 (MYPASPSAGPALHPVPHRARLPRPRCLAEPPRSPAPGPGSTARPPPPAPGPRPR) is disordered. Positions 31-52 (PRSPAPGPGSTARPPPPAPGPR) are enriched in pro residues. The HTH psq-type domain maps to 56 to 107 (AVKMTFRKAYSIKDKLQAIERVKGGERQASVCRDFGVPGGTLRGWLKDEPKL). 2 consecutive DNA-binding regions (H-T-H motif) follow at residues 83 to 103 (QASV…WLKD) and 154 to 187 (PVIQ…WQKR). The 74-residue stretch at 121-194 (QRKKMRLANE…QKRHGISSQR (74 aa)) folds into the HTH CENPB-type domain. Positions 198-208 (EAEPPVAGPAP) are enriched in low complexity. The interval 198 to 230 (EAEPPVAGPAPVKEEPAQPSSAGLLLDGTPATL) is disordered. In terms of domain architecture, DDE-1 spans 239 to 364 (DEQIYNANVT…CLQQKAVLLV (126 aa)). The segment at 543–583 (GLPEGCGEEVAPAAPPSPASLPSSIGAGEEEEEEATEQGGV) is disordered.

Belongs to the tigger transposable element derived protein family.

The protein localises to the nucleus. This is Tigger transposable element derived 5 (Tigd5) from Rattus norvegicus (Rat).